The chain runs to 1129 residues: Inositol hexakisphosphate and diphosphoinositol-pentakisphosphate kinase 2 (1129 aa).

Position 44 is a phosphoserine (Ser-44). A substrate-binding site is contributed by 59 to 60 (KK). Residues Arg-140, Lys-193, His-200, and Arg-219 each coordinate ATP. 219–220 (RK) serves as a coordination point for substrate. Phosphoserine is present on Ser-229. ATP contacts are provided by residues 243–246 (EEFM) and 252–254 (DVK). Residues Lys-254 and Arg-268 each coordinate substrate. Residues Ser-270, Asp-315, and 327 to 329 (DVN) each bind ATP. A substrate-binding site is contributed by 332–335 (SFVK). Residues 377–448 (PTTSGTMMEL…VLDIARQLLM (72 aa)) form a polyphosphoinositide-binding domain region. Positions 904 to 945 (KGCEEDKNLPSGYGYRPASRENEGRRSLKTDDDEPHTSKRDE) are disordered. The segment covering 921 to 945 (ASRENEGRRSLKTDDDEPHTSKRDE) has biased composition (basic and acidic residues). Ser-1051, Ser-1058, and Ser-1066 each carry phosphoserine. The disordered stretch occupies residues 1070–1129 (YTPTKILPTPPAALKSSKASSKAAAGGPSQAMAPHTSSRKKSINSKTEGHEPKKSTGKKR). Residues 1081–1098 (AALKSSKASSKAAAGGPS) show a composition bias toward low complexity. Phosphoserine is present on residues Ser-1106 and Ser-1107.

The protein belongs to the histidine acid phosphatase family. VIP1 subfamily. Ubiquitously expressed. Expressed in the cochlear and vestibular sensory hair cells, supporting cells and spiral ganglion neurons.

Its subcellular location is the cytoplasm. It localises to the cytosol. It carries out the reaction 1D-myo-inositol hexakisphosphate + ATP = 1-diphospho-1D-myo-inositol 2,3,4,5,6-pentakisphosphate + ADP. It catalyses the reaction 5-diphospho-1D-myo-inositol 1,2,3,4,6-pentakisphosphate + ATP + H(+) = 1,5-bis(diphospho)-1D-myo-inositol 2,3,4,6-tetrakisphosphate + ADP. Its function is as follows. Bifunctional inositol kinase that acts in concert with the IP6K kinases IP6K1, IP6K2 and IP6K3 to synthesize the diphosphate group-containing inositol pyrophosphates diphosphoinositol pentakisphosphate, PP-InsP5, and bis-diphosphoinositol tetrakisphosphate, (PP)2-InsP4. PP-InsP5 and (PP)2-InsP4, also respectively called InsP7 and InsP8, regulate a variety of cellular processes, including apoptosis, vesicle trafficking, cytoskeletal dynamics, exocytosis, insulin signaling and neutrophil activation. Phosphorylates inositol hexakisphosphate (InsP6) at position 1 to produce PP-InsP5 which is in turn phosphorylated by IP6Ks to produce (PP)2-InsP4. Alternatively, phosphorylates PP-InsP5 at position 1, produced by IP6Ks from InsP6, to produce (PP)2-InsP4. Required for normal hearing. The protein is Inositol hexakisphosphate and diphosphoinositol-pentakisphosphate kinase 2 of Mus musculus (Mouse).